The chain runs to 191 residues: Ferric nitrobindin-like protein (191 aa).

Positions 20 to 26 (GDWAGAG) match the GXWXGXG motif.

The protein belongs to the nitrobindin family.

In Streptomyces coelicolor (strain ATCC BAA-471 / A3(2) / M145), this protein is Ferric nitrobindin-like protein.